The primary structure comprises 602 residues: Elongation factor 4 (602 aa).

One can recognise a tr-type G domain in the interval 7-188 (ENIRNFSIIA…SIIRLVPPPK (182 aa)). Residues 19–24 (DHGKST) and 135–138 (NKID) contribute to the GTP site.

The protein belongs to the TRAFAC class translation factor GTPase superfamily. Classic translation factor GTPase family. LepA subfamily.

The protein localises to the cell inner membrane. The enzyme catalyses GTP + H2O = GDP + phosphate + H(+). In terms of biological role, required for accurate and efficient protein synthesis under certain stress conditions. May act as a fidelity factor of the translation reaction, by catalyzing a one-codon backward translocation of tRNAs on improperly translocated ribosomes. Back-translocation proceeds from a post-translocation (POST) complex to a pre-translocation (PRE) complex, thus giving elongation factor G a second chance to translocate the tRNAs correctly. Binds to ribosomes in a GTP-dependent manner. In Chlamydia trachomatis serovar A (strain ATCC VR-571B / DSM 19440 / HAR-13), this protein is Elongation factor 4.